A 1617-amino-acid chain; its full sequence is Mitogen-activated protein kinase kinae kinase bck1 (1617 aa).

9 disordered regions span residues 1–73 (MDGQ…SQLQ), 167–199 (GPVH…RTMP), 211–253 (SVAS…GGMS), 345–399 (RQIH…SPNL), 455–555 (DHRR…SSSY), 568–633 (KRSK…LRGK), 739–820 (GVPL…ISPE), 832–1144 (EHKR…RGDI), and 1165–1277 (IDLD…EILR). Positions 19 to 28 (TQPSQSHMLS) are enriched in low complexity. Over residues 44–60 (VMPPPPPGPPPGPPPGP) the composition is skewed to pro residues. The segment covering 220-248 (TAQNHQSQTGQTNEPTKSPSHRQNNSNTL) has biased composition (polar residues). A compositionally biased stretch (polar residues) spans 482–504 (KSGSPATQHATLNQGLSSSSTGD). Residues 524-533 (RYYESRKGQE) are compositionally biased toward basic and acidic residues. Composition is skewed to polar residues over residues 535–555 (IRPS…SSSY) and 586–596 (ESPTSPVNLRQ). Composition is skewed to basic and acidic residues over residues 832 to 841 (EHKREVERKQ) and 871 to 885 (FDER…KKAD). Polar residues-rich tracts occupy residues 897 to 907 (PQESYTLTRIN) and 956 to 980 (GGKQ…PQSS). Composition is skewed to basic and acidic residues over residues 1128 to 1140 (EDER…DSFA) and 1189 to 1198 (PENDLHKKEN). Polar residues-rich tracts occupy residues 1199–1208 (QPSSSYTGEM) and 1257–1272 (NQAS…NQKS). The region spanning 1323 to 1596 (IIRGQLIGKG…QTLLTRHPFC (274 aa)) is the Protein kinase domain. ATP is bound by residues 1329–1337 (IGKGTYGRV) and Lys-1352.

This sequence belongs to the protein kinase superfamily. STE Ser/Thr protein kinase family. MAP kinase kinase kinase subfamily.

The enzyme catalyses L-seryl-[protein] + ATP = O-phospho-L-seryl-[protein] + ADP + H(+). It carries out the reaction L-threonyl-[protein] + ATP = O-phospho-L-threonyl-[protein] + ADP + H(+). In terms of biological role, mitogen-activated protein kinase kinase kinase; part of cell wall integrity (CWI) signaling pathway composed of pkcA, the bck1-mkk2-mpka MAPK cascade and the downstream rlmA transcription regulator. The CWI signaling pathway regulates cell wall integrity and pyomelanin formation. CWI also controls oxidative stress response, gliotoxin production, iron adaptation and asexual development. Finally, CWI is constitutively required for A.fumigatus to cope with the temperature increase found in the mammalian lung environment, during infection. This Aspergillus fumigatus (strain ATCC MYA-4609 / CBS 101355 / FGSC A1100 / Af293) (Neosartorya fumigata) protein is Mitogen-activated protein kinase kinae kinase bck1.